Here is a 506-residue protein sequence, read N- to C-terminus: Anaerobic nitric oxide reductase transcription regulator NorR (506 aa).

Asp57 is modified (4-aspartylphosphate). Positions 187 to 416 (MIGLSPAMTQ…LEHAIHRAVV (230 aa)) constitute a Sigma-54 factor interaction domain. Residues 215-222 (GETGTGKE) and 278-287 (ADNGTLFLDE) contribute to the ATP site. A DNA-binding region (H-T-H motif) is located at residues 481 to 500 (WAASARALETDVANLHRLAK).

Its pathway is nitrogen metabolism; nitric oxide reduction. In terms of biological role, required for the expression of anaerobic nitric oxide (NO) reductase, acts as a transcriptional activator for at least the norVW operon. Activation also requires sigma-54. This Salmonella paratyphi C (strain RKS4594) protein is Anaerobic nitric oxide reductase transcription regulator NorR.